Consider the following 94-residue polypeptide: Integration host factor subunit beta (94 aa).

It belongs to the bacterial histone-like protein family. In terms of assembly, heterodimer of an alpha and a beta chain.

This protein is one of the two subunits of integration host factor, a specific DNA-binding protein that functions in genetic recombination as well as in transcriptional and translational control. In Yersinia pseudotuberculosis serotype O:1b (strain IP 31758), this protein is Integration host factor subunit beta.